The following is a 276-amino-acid chain: MKDMGEDRPGIGHSTNLVGLPTDLLASAWFNQAAPEIHIAGVREMNRSLFEMLAEAPDLESAGEAFYKYMIAMFGLDPEQQDHRPGQGGAVRRFHASYLRLLKGWGYDTNAKEGAVLKGWVESRFGLFPTFHREPITKFASKAWITYIEEKMTSRFHNNSIYVQLDLMYEFCQWALARFAAPGESALLLYRGVNDFTEHQMIERIDNRQVVVRMNNLVSFSSDRGVADCFGDTILETRVPVSKIVFFNTLLTSHPLKGEGEYLVIGGDYLVKASYL.

As to quaternary structure, monomer.

It carries out the reaction L-arginyl-[dinitrogen reductase] + NAD(+) = N(omega)-alpha-(ADP-D-ribosyl)-L-arginyl-[dinitrogen reductase] + nicotinamide + H(+). Functionally, involved in the regulation of the nitrogen fixation activity by the reversible ADP-ribosylation of the dinitrogenase reductase component of the nitrogenase enzyme complex. The ADP-ribosyltransferase (DraT) transfers the ADP-ribose group from NAD to dinitrogenase reductase. The ADP-ribose group is removed through the action of the ADP-ribosylglycohydrolase (DraG). The sequence is that of NAD(+)--dinitrogen-reductase ADP-D-ribosyltransferase (draT) from Rhodospirillum rubrum.